The following is a 352-amino-acid chain: Lipid storage droplets surface-binding protein 2 (352 aa).

Disordered regions lie at residues 1–28 (MASAEQKHATGNGTTGNGTAMNDVDQPK) and 298–352 (NVEQ…VSSQ). Residues 298–309 (NVEQSGGSSSDA) show a composition bias toward polar residues. The segment covering 315-329 (TTTSTTTTTTTSSTS) has biased composition (low complexity).

It belongs to the perilipin family. As to expression, ubiquitous expression in early embryos. At stage 5 expression is restricted to the pole cells. At stage 11 expression is seen in the amnioserosa, refined to the fat body and midgut by stage 14. Also seen in the hindgut by the end of embryogenesis. Expression is seen in larval fat body (at protein level).

The protein resides in the cytoplasm. The protein localises to the lipid droplet. Its function is as follows. Essential for embryogenesis. Required for normal deposition of neutral lipids in the oocyte. The protein is Lipid storage droplets surface-binding protein 2 of Drosophila melanogaster (Fruit fly).